Reading from the N-terminus, the 1898-residue chain is MNWDTLKGVLKTRRLTKRTIPAYIHPTSRSDSTSSTQSATAGFILNEEPITLFRLELERLQYILHFPEEVAFQLSSTEYQLFYSIQPMDYVRYVSCDLTSVPVSENPSPVRNLVKRLSEVSSWITHVIVSQPTHDDRKVALTAILRIVETCWNIGNFNAAVEVLMGLKSEKLRPFWLSLRQEEKSQFDSLCETLLPANQALPSQAYINAVQRALRMPQSRVIPFFGIFLRDLYAIVNDLPNIVVIGQEGETQKLEFMSDPNGEDHFSSRIGVGGLLNADKINLVAIVLDNLELFHRHSRTMIKLLEEQAVPPIQIPQNEREQKEKEAKTYEPVQVVRGSSHGVALIPLDTLTFDLDVIQRLQHGTTVIHYEPDSGRSNLCLLRLDPSCGQINWHKISYSVNKDPKEKDVLAKVSVSNLQPLDSGRGAPSPMPSGRTPGTGGVGVEEGELKLSVVKGVELVDSYDIDIEAIYRRHSMEEMSVPVSCWKVSHGQLLSDNEFIYFLAPQQIAQFWTNGLQSVVKSLQGQQRYPDRRMLWIKNVYLSLYEITGESNCGPRPFEALQAFGLSQTNTNATRPNDSSLSSEPGGAKSRLKNLKNAMQKKLRGASREGSRSQSPQPHSPLVRPPSIKSQISSQSGPPGPNSPGYLLKPRGEPANSDAGDIDSIYTPRSRTPTSSSYGGRSVGGRSCKSWRSRGGETPNSGSISSSGQMSIQVSGLSGPSGKEFQEKPLTLVEFAELFRLFNTRMRKDLRDVFNDVLSTATTPQHCPKRERDRHSPRMQSRLASVSNSYNADFLSNDFLTRNTAVTSHHISEKQNKIYNALALASVNSMGGLMDTSRSSMLTPQMLRAFVNTHQMEQIDEQTAIKLIQDHEPDGICRQKNQMSFEGFTRFLCDPVNFAFVPETIEPDEEDLRYPLSHYYINSSHNTYLTGHQLKGPSSSEMYRQVLLTGCRCVELDCWDGDDGLPLIYHGHTLVSKIGFRQVVEIIKKSAFITSDLPVILSIENHCSLQQQAKMAQMFKTVLGDLLVSNFLFEADFSDSPRLPCPLQMKNKILIKNKKMIVDPPTPLPMIERGAVQRGETQLNLHRKQSKNSYESSTVDEVEDDDLDEFLDDEENEEDDQEEVQVRSEKEDSPKTSKRAEKSARNIKQQDSLCSDHSVEQAKPSTSKTTSKTNDRKTEDEVLYAQLAQNAIRNQQPRKNNTGVQIAPELSDIVIYMQATKFKGFPPVDGIQSPRIMEEGPASASLSFSSRARTPSNLLNTPAPPRRQRSSTQLSQELAAEFLGSVRANATATCYQVTSLNENAAKKLMKRHPAKCVSYTRDHLIRTYPSAKHYDSSNFNPINCWAHGMQMVALNFQTPDVIMAVNQAMFEQSGNCGYQLKPRCLWDESHLLYNKFLPLSKDIAGHSALLLNLTIISGQHVYPNTHYASLYVEIEVIGIHNDCVREKSKVVQRNSVNPIWNHTTQLRIACVDLAFLRIAVCDSGQNGRVVAHRVVPVKCIRPGFRHLPLRTPTNLPIDNAMIFLRTRFEQEEHIYLHDDDSNTYCNLEHTLAYRTDLTPNLSPTPILKKQIFVLRITGAFADETAITVHSESGSTVKTVMQQALLNAGKNADQVEEYVLIEESLPAPSGEDPIEQRVLPLNEPIMDAVACWNGSMRRFVLRKKGSDPSSRAWITSIIKSGTSGSSTSVSPSPLTKDGHVKSASSNQLHGRSLDTDAFGEHLEVTEGKWLNPRARSMGDTFLVCVHNVSEDQPYAILRAGIHSTAADIIRQVFVKARRSNVDDSEFVLVEETCDDPKLNQGQSMLQALSLARKRSNDLTPKYPNNRTTSRVLGQNENVWKAQSRWKSMGRFVLENRKDTVHATLEKEFHEMAKIIREGIPKKDETYYMIYYSGLPGEDI.

The Ras-GEF domain maps to 66–328 (FPEEVAFQLS…EREQKEKEAK (263 aa)). 2 disordered regions span residues 419 to 444 (QPLDSGRGAPSPMPSGRTPGTGGVGV) and 569 to 722 (TNTN…GPSG). Over residues 569 to 583 (TNTNATRPNDSSLSS) the composition is skewed to polar residues. Residues 590–605 (SRLKNLKNAMQKKLRG) are compositionally biased toward basic residues. Low complexity-rich tracts occupy residues 625 to 637 (PPSIKSQISSQSG), 666 to 687 (YTPRSRTPTSSSYGGRSVGGRS), and 701 to 716 (SGSISSSGQMSIQVSG). The PI-PLC X-box domain occupies 910–1058 (EDLRYPLSHY…MKNKILIKNK (149 aa)). Residues His925 and His970 contribute to the active site. Disordered regions lie at residues 1082–1178 (QLNL…DRKT) and 1238–1274 (EEGPASASLSFSSRARTPSNLLNTPAPPRRQRSSTQL). The span at 1098–1123 (TVDEVEDDDLDEFLDDEENEEDDQEE) shows a compositional bias: acidic residues. The span at 1124–1144 (VQVRSEKEDSPKTSKRAEKSA) shows a compositional bias: basic and acidic residues. Residues 1146 to 1155 (NIKQQDSLCS) are compositionally biased toward polar residues. Low complexity-rich tracts occupy residues 1163-1172 (KPSTSKTTSK) and 1242-1253 (ASASLSFSSRAR). The PI-PLC Y-box domain maps to 1279–1385 (AAEFLGSVRA…CGYQLKPRCL (107 aa)). Residues 1391–1517 (LLYNKFLPLS…PLRTPTNLPI (127 aa)) form the C2 domain. Residues 1570–1665 (QIFVLRITGA…RRFVLRKKGS (96 aa)) enclose the Ras-associating 1 domain. A compositionally biased stretch (low complexity) spans 1680–1694 (GTSGSSTSVSPSPLT). Positions 1680 to 1711 (GTSGSSTSVSPSPLTKDGHVKSASSNQLHGRS) are disordered. The Ras-associating 2 domain occupies 1738–1857 (DTFLVCVHNV…GRFVLENRKD (120 aa)).

As to quaternary structure, interacts (via Ras-associating domain 1) with let-60 (in GTP-bound form). Requires Ca(2+) as cofactor. Expressed in the spermatheca, vulva, intestine and excretory cells. Expressed in sensory neurons AWC, AFD, ASE, ASG and BAG, interneurons, ventral nerve cord neurons and tail neurons. Expressed in body muscles.

It catalyses the reaction a 1,2-diacyl-sn-glycero-3-phospho-(1D-myo-inositol-4,5-bisphosphate) + H2O = 1D-myo-inositol 1,4,5-trisphosphate + a 1,2-diacyl-sn-glycerol + H(+). Functionally, the production of the second messenger molecules diacylglycerol (DAG) and inositol 1,4,5-trisphosphate (IP3) is mediated by activated phosphatidylinositol-specific phospholipase C enzymes. plc-1 is a bifunctional enzyme which also regulates small GTPases of the Ras superfamily through its Ras guanine-exchange factor (RasGEF) activity. By activating IP3 receptor itr-1-mediated intracellular Ca(2+) release via the production of IP3, regulates ovulation by controlling contraction and/or dilation of the distal spermatheca valve during oocyte entry and the timing of the dilation of the spermatheca-uterine valve during oocyte exit. In a similar manner, plays an essential role in epidermal morphogenesis by regulating migration of epidermal cells during ventral closure and to a lesser extent by regulating epidermal cell dorsal intercalation. Involved in the immune response to S.aureus bacterium by activating kinase dkf-1 via the production of DAG which in turn activates transcription factor hlh-30. In ASER neurons, required for adjusting the orientation behavior in salt gradients based on the memory of previous salt concentration encountered. This chain is 1-phosphatidylinositol 4,5-bisphosphate phosphodiesterase epsilon-1, found in Caenorhabditis elegans.